The chain runs to 181 residues: Small ribosomal subunit protein uS4 (181 aa).

Positions 108-172 (RRLQTQVYRR…SPLVSDIHSE (65 aa)) constitute an S4 RNA-binding domain.

Belongs to the universal ribosomal protein uS4 family. Part of the 30S ribosomal subunit. Contacts protein S5. The interaction surface between S4 and S5 is involved in control of translational fidelity.

Its function is as follows. One of the primary rRNA binding proteins, it binds directly to 16S rRNA where it nucleates assembly of the body of the 30S subunit. Functionally, with S5 and S12 plays an important role in translational accuracy. This chain is Small ribosomal subunit protein uS4, found in Methanospirillum hungatei JF-1 (strain ATCC 27890 / DSM 864 / NBRC 100397 / JF-1).